The following is a 209-amino-acid chain: Ribosomal RNA large subunit methyltransferase E (209 aa).

5 residues coordinate S-adenosyl-L-methionine: glycine 63, tryptophan 65, aspartate 83, aspartate 99, and aspartate 124. Lysine 164 serves as the catalytic Proton acceptor.

The protein belongs to the class I-like SAM-binding methyltransferase superfamily. RNA methyltransferase RlmE family.

It is found in the cytoplasm. The catalysed reaction is uridine(2552) in 23S rRNA + S-adenosyl-L-methionine = 2'-O-methyluridine(2552) in 23S rRNA + S-adenosyl-L-homocysteine + H(+). Specifically methylates the uridine in position 2552 of 23S rRNA at the 2'-O position of the ribose in the fully assembled 50S ribosomal subunit. The sequence is that of Ribosomal RNA large subunit methyltransferase E from Photobacterium profundum (strain SS9).